We begin with the raw amino-acid sequence, 204 residues long: LexA repressor (204 aa).

The H-T-H motif DNA-binding region spans 29-49 (RAEIADIMGFQSKNAASDHLR). Residues S123 and K160 each act as for autocatalytic cleavage activity in the active site.

The protein belongs to the peptidase S24 family. As to quaternary structure, homodimer.

The catalysed reaction is Hydrolysis of Ala-|-Gly bond in repressor LexA.. In terms of biological role, represses a number of genes involved in the response to DNA damage (SOS response), including recA and lexA. In the presence of single-stranded DNA, RecA interacts with LexA causing an autocatalytic cleavage which disrupts the DNA-binding part of LexA, leading to derepression of the SOS regulon and eventually DNA repair. This chain is LexA repressor, found in Alcanivorax borkumensis (strain ATCC 700651 / DSM 11573 / NCIMB 13689 / SK2).